Here is a 3256-residue protein sequence, read N- to C-terminus: Proliferation marker protein Ki-67 (3256 aa).

The FHA domain maps to 27-76 (CLFGRGIECDIRIQLPVVSKQHCKIEIHEQEAILHNFSSTNPTQVNGSVI). Residues 101 to 199 (SLQNGRKSTE…RNGRNAADPI (99 aa)) form a disordered region. Residues 107–122 (KSTEFPRKIREQEPAR) are compositionally biased toward basic and acidic residues. 3 positions are modified to phosphoserine: Ser125, Ser128, and Ser166. A compositionally biased stretch (basic and acidic residues) spans 161–173 (NVKEDSTADDSKD). Over residues 174–183 (SVAQGTTNVH) the composition is skewed to polar residues. Lys245 is covalently cross-linked (Glycyl lysine isopeptide (Lys-Gly) (interchain with G-Cter in SUMO2)). A phosphoserine mark is found at Ser264, Ser296, and Ser308. 2 disordered regions span residues 271–426 (ATEK…RGSI) and 513–542 (RPEL…LVMH). Residues 314-324 (DQNKGKGRDVE) show a composition bias toward basic and acidic residues. Phosphothreonine occurs at positions 328 and 347. Polar residues predominate over residues 349-358 (VQYSQQQNSP). 3 positions are modified to phosphoserine: Ser352, Ser357, and Ser374. Thr401 carries the phosphothreonine modification. Position 411 is a phosphoserine (Ser411). Positions 414–425 (KPENLSSKTRGS) are enriched in polar residues. Positions 495 to 678 (ESEGIPLKRR…AKQTQTKVIK (184 aa)) are positively charged patch (CP). The 48-residue stretch at 502 to 549 (KRRRVSFGGHLRPELFDENLPPNTPLKRGEAPTKRKSLVMHTPPVLKK) folds into the PP1-binding domain. Phosphoserine is present on Ser538. A Phosphothreonine modification is found at Thr543. The interval 575-632 (SLVISPPAPSPRKTPVASDQRRRSCKTAPASSSKSQTEVPKRGGRKSGNLPSKRVSIS) is disordered. 2 positions are modified to phosphoserine: Ser579 and Ser584. Residues 603-612 (PASSSKSQTE) show a composition bias toward polar residues. The residue at position 648 (Ser648) is a Phosphoserine. The tract at residues 674–707 (TKVIKHGPQRSMNKRQRRPATPKKPVGEVHSQFS) is disordered. A compositionally biased stretch (basic residues) spans 676-694 (VIKHGPQRSMNKRQRRPAT). Phosphothreonine is present on Thr761. Residues 853 to 886 (SLETKTSDTETEPSKTVSTANRSGRSTEFRNIQK) are disordered. The residue at position 859 (Ser859) is a Phosphoserine. Polar residues predominate over residues 866-882 (SKTVSTANRSGRSTEFR). The segment at 1000 to 2928 (GKITKMPCQS…ASFQELSQTP (1929 aa)) is 16 X 122 AA approximate repeats. K167R repeat units follow at residues 1001–1112 (KITK…FQTP), 1123–1234 (KTTK…FQTP), 1245–1356 (KTTK…FQTP), 1367–1477 (KTTK…FQTP), 1488–1597 (KTTK…LFQT), and 1609–1720 (KTAK…FQTP). Thr1017 carries the post-translational modification Phosphothreonine. Residues Lys1022 and Lys1035 each participate in a glycyl lysine isopeptide (Lys-Gly) (interchain with G-Cter in SUMO2) cross-link. The disordered stretch occupies residues 1045 to 1073 (TRTSGETTHTHREPAGDGKSIRTFKESPK). A compositionally biased stretch (basic and acidic residues) spans 1052–1072 (THTHREPAGDGKSIRTFKESP). Ser1071 bears the Phosphoserine mark. Thr1091 is modified (phosphothreonine). Lys1093 is covalently cross-linked (Glycyl lysine isopeptide (Lys-Gly) (interchain with G-Cter in SUMO1); alternate). Residue Lys1093 forms a Glycyl lysine isopeptide (Lys-Gly) (interchain with G-Cter in SUMO2); alternate linkage. At Ser1098 the chain carries Phosphoserine. Residues 1109-1151 (FQTPGPSEESMTDEKTTKIACKSPPPESVDTPTSTKQWPKRSL) are disordered. Thr1111 bears the Phosphothreonine mark. The residue at position 1131 (Ser1131) is a Phosphoserine. Residue Thr1139 is modified to Phosphothreonine. Phosphoserine is present on Ser1142. A Phosphothreonine modification is found at Thr1167. Ser1169 is subject to Phosphoserine. Residue Thr1176 is modified to Phosphothreonine. Glycyl lysine isopeptide (Lys-Gly) (interchain with G-Cter in SUMO2) cross-links involve residues Lys1185 and Lys1188. Position 1193 is a phosphothreonine (Thr1193). Ser1207 carries the post-translational modification Phosphoserine. Thr1233 carries the post-translational modification Phosphothreonine. Positions 1246–1276 (TTKIPCDSPQSDPVDTPTSTKQRPKRSIRKA) are disordered. Ser1253 and Ser1256 each carry phosphoserine. The segment covering 1253 to 1266 (SPQSDPVDTPTSTK) has biased composition (polar residues). Phosphothreonine is present on residues Thr1261, Thr1298, Thr1315, and Thr1327. The segment at 1323–1518 (TENLTGSKRR…PQSKRSLRKV (196 aa)) is disordered. Ser1329 bears the Phosphoserine mark. Position 1335 is a phosphothreonine (Thr1335). Lys1337 participates in a covalent cross-link: Glycyl lysine isopeptide (Lys-Gly) (interchain with G-Cter in SUMO2). At Thr1355 the chain carries Phosphothreonine. The residue at position 1376 (Ser1376) is a Phosphoserine. Thr1383 carries the post-translational modification Phosphothreonine. Phosphoserine is present on Ser1386. Basic and acidic residues-rich tracts occupy residues 1394–1406 (PLEK…ELSA) and 1418–1442 (THTD…KQKL). 2 positions are modified to phosphothreonine: Thr1420 and Thr1437. Residue Ser1496 is modified to Phosphoserine. Thr1503 carries the post-translational modification Phosphothreonine. Position 1506 is a phosphoserine (Ser1506). Position 1540 is a phosphothreonine (Thr1540). Tyr1552 carries the phosphotyrosine modification. Residues Thr1557 and Thr1569 each carry the phosphothreonine modification. 2 positions are modified to phosphoserine: Ser1571 and Ser1617. The disordered stretch occupies residues 1597–1675 (TRGHTEESMT…PTGDGKSMKA (79 aa)). Lys1639 carries the post-translational modification N6-acetyllysine. Lys1643 is covalently cross-linked (Glycyl lysine isopeptide (Lys-Gly) (interchain with G-Cter in SUMO2)). Over residues 1660-1672 (THTHTEPTGDGKS) the composition is skewed to basic and acidic residues. A phosphoserine mark is found at Ser1679 and Ser1689. 5 disordered regions span residues 1689–1708 (SLTG…EVPE), 1717–1765 (FQTP…ADTE), 1771–1790 (FRKQ…PAVG), 1801–1824 (TPVQ…TRKE), and 1839–1886 (FQTP…KADV). Lys1703 is covalently cross-linked (Glycyl lysine isopeptide (Lys-Gly) (interchain with G-Cter in SUMO2)). Thr1719 bears the Phosphothreonine mark. Residue Ser1721 is modified to Phosphoserine. Basic and acidic residues predominate over residues 1722-1733 (HTKESMTNEKTT). 5 K167R repeats span residues 1731–1842 (KTTK…FQTP), 1854–1964 (TKKI…FQTP), 1975–2086 (KITE…FQTP), 2097–2204 (KTTK…FQTP), and 2215–2326 (KTTK…FQTP). At Ser1740 the chain carries Phosphoserine. 4 positions are modified to phosphothreonine: Thr1747, Thr1764, Thr1784, and Thr1801. At Ser1815 the chain carries Phosphoserine. Residue Thr1841 is modified to Phosphothreonine. Residues Ser1861 and Ser1864 each carry the phosphoserine modification. Residues 1861–1874 (SPQSDPADTPTNTK) are compositionally biased toward polar residues. Phosphothreonine is present on residues Thr1869, Thr1897, Thr1906, and Thr1923. Ser1937 carries the phosphoserine modification. The disordered stretch occupies residues 1961-2002 (FQTPGHTEESMTDDKITEVSCKSPQPDPVKTPTSSKQRLKIS). Thr1963 carries the phosphothreonine modification. The segment covering 1966-1977 (HTEESMTDDKIT) has biased composition (basic and acidic residues). Ser1983 is subject to Phosphoserine. The residue at position 2005 (Lys2005) is an N6-acetyllysine. Residue Lys2009 forms a Glycyl lysine isopeptide (Lys-Gly) (interchain with G-Cter in SUMO1); alternate linkage. Lys2009 is covalently cross-linked (Glycyl lysine isopeptide (Lys-Gly) (interchain with G-Cter in SUMO2); alternate). The disordered stretch occupies residues 2017 to 2192 (KLTQTSGKTT…TPKGKAQPLE (176 aa)). Phosphothreonine is present on residues Thr2028 and Thr2065. 2 stretches are compositionally biased toward basic and acidic residues: residues 2028–2046 (THRE…KESA) and 2061–2070 (RWPRTPKEEA). A Glycyl lysine isopeptide (Lys-Gly) (interchain with G-Cter in SUMO1); alternate cross-link involves residue Lys2067. A Glycyl lysine isopeptide (Lys-Gly) (interchain with G-Cter in SUMO2); alternate cross-link involves residue Lys2067. Ser2072 bears the Phosphoserine mark. The residue at position 2085 (Thr2085) is a Phosphothreonine. Basic and acidic residues predominate over residues 2087–2099 (DHTEESTTDDKTT). Residue Ser2105 is modified to Phosphoserine. Thr2113 is subject to Phosphothreonine. A phosphoserine mark is found at Ser2116 and Ser2135. Over residues 2145 to 2168 (HTDKVPGDEDKGINVFRETAKQKL) the composition is skewed to basic and acidic residues. Residues Thr2146, Thr2163, and Thr2203 each carry the phosphothreonine modification. The segment at 2205 to 2400 (ICTDKPTTHE…KPAVSDEKNI (196 aa)) is disordered. The residue at position 2223 (Ser2223) is a Phosphoserine. Phosphothreonine occurs at positions 2231 and 2233. Position 2239 is a phosphoserine (Ser2239). Thr2259 bears the Phosphothreonine mark. Residue Ser2261 is modified to Phosphoserine. Residues Thr2268, Thr2285, Thr2325, Thr2328, and Thr2333 each carry the phosphothreonine modification. K167R repeat units follow at residues 2336–2447 (KTTK…FQTP), 2458–2569 (KITE…FSAP), 2580–2688 (KNTK…LSET), 2700–2805 (KATK…GFKD), and 2819–2928 (KTTK…SQTP). Ser2344 is modified (phosphoserine). Residues Thr2352 and Thr2389 each carry the phosphothreonine modification. The residue at position 2395 (Ser2395) is a Phosphoserine. Thr2406 is subject to Phosphothreonine. Ser2420 carries the phosphoserine modification. Residues Thr2426 and Thr2446 each carry the phosphothreonine modification. The disordered stretch occupies residues 2445–2480 (QTPGHTEESMTDDKITEVSCKSPQPESFKTSRSSKQ). Over residues 2449–2460 (HTEESMTDDKIT) the composition is skewed to basic and acidic residues. The segment covering 2463–2475 (SCKSPQPESFKTS) has biased composition (polar residues). Position 2466 is a phosphoserine (Ser2466). Residue Lys2492 forms a Glycyl lysine isopeptide (Lys-Gly) (interchain with G-Cter in SUMO1) linkage. The tract at residues 2497 to 2521 (AVSKLTRTSGETTQTHTEPTGDSKS) is disordered. Residues 2501–2514 (LTRTSGETTQTHTE) show a composition bias toward polar residues. Ser2505, Ser2528, and Ser2588 each carry phosphoserine. The disordered stretch occupies residues 2570-3256 (GHTEESMTID…TRSHRDSEDI (687 aa)). 3 stretches are compositionally biased toward basic and acidic residues: residues 2609–2618 (RKEVKEELSA), 2632–2644 (THKE…EGIK), and 2660–2675 (EPSR…KAQP). Lys2613 is covalently cross-linked (Glycyl lysine isopeptide (Lys-Gly) (interchain with G-Cter in SUMO1); alternate). Lys2613 participates in a covalent cross-link: Glycyl lysine isopeptide (Lys-Gly) (interchain with G-Cter in SUMO2); alternate. Phosphoserine is present on Ser2638. Residues 2685–2696 (LSETSGHTQESL) show a composition bias toward polar residues. Ser2708 bears the Phosphoserine mark. Lys2734 participates in a covalent cross-link: Glycyl lysine isopeptide (Lys-Gly) (interchain with G-Cter in SUMO1); alternate. Residue Lys2734 forms a Glycyl lysine isopeptide (Lys-Gly) (interchain with G-Cter in SUMO2); alternate linkage. Composition is skewed to basic and acidic residues over residues 2751–2770 (DADK…KESA) and 2810–2821 (HTEESMTDDKTT). A phosphoserine mark is found at Ser2827, Ser2828, and Ser2838. Residue Lys2852 forms a Glycyl lysine isopeptide (Lys-Gly) (interchain with G-Cter in SUMO1); alternate linkage. A Glycyl lysine isopeptide (Lys-Gly) (interchain with G-Cter in SUMO2); alternate cross-link involves residue Lys2852. Residues 2869-2881 (THTDKEPVGEGKG) show a composition bias toward basic and acidic residues. Polar residues predominate over residues 2941–2951 (SFTSAPKQTPD). Residue Lys2967 forms a Glycyl lysine isopeptide (Lys-Gly) (interchain with G-Cter in SUMO2) linkage. The span at 2982–2991 (KSQSKSNTSL) shows a compositional bias: polar residues. Position 2986 is an N6-acetyllysine (Lys2986). Over residues 3029 to 3039 (KKQRVAPRARG) the composition is skewed to basic residues. 3034–3041 (APRARGKS) is an ATP binding site. Position 3041 is a phosphoserine (Ser3041). 2 stretches are compositionally biased toward basic and acidic residues: residues 3071 to 3080 (KTNKEEHKLQ) and 3113 to 3124 (ERIEINRNEKKP). The residue at position 3128 (Ser3128) is a Phosphoserine. Basic and acidic residues predominate over residues 3138–3154 (DGARKPIPRDKVTENKR). Polar residues predominate over residues 3207–3223 (SQPAASTLESKSVQRVT). Residues 3228–3241 (RCAENPKKAEDNVC) show a composition bias toward basic and acidic residues.

As to quaternary structure, interacts with KIF15. Interacts (via the FHA domain) with NIFK. Interacts with PPP1CC. Component of a complex at least composed of ZNF335, HCFC1, CCAR2, EMSY, MKI67, RBBP5, ASH2L and WDR5; the complex is formed as a result of interactions between components of a nuclear receptor-mediated transcription complex and a histone methylation complex. Interacts with ZNF335. In terms of processing, hyperphosphorylated by CDK1 in mitosis; hyperphosphorylatiom prevents undergoing liquid-liquid phase separation. Dephosphorylated by PPP1CC at the onset of anaphase. Dephosphorylated by protein phosphatase 2A (PP2A) at the onset of anaphase. Dephosphorylation by protein phosphatase 2A (PP2A) and simultaneous exposure of the positively charged patch (CP) during mitotic exit induce the RNA-dependent formation of a liquid-like condensed phase on the chromosome surface. Ubiquitinated by the APC/C complex after neuronal progenitors exit mitosis during brain development, leading to clearance from constitutive heterochromatin.

It is found in the chromosome. It localises to the nucleus. The protein resides in the nucleolus. Protein that associates with the surface of mitotic chromosomes and acts both as a chromosome repellent during early mitosis and chromosome attractant during late mitosis. Required to maintain individual mitotic chromosomes dispersed in the cytoplasm following nuclear envelope disassembly. During early mitosis, relocalizes from nucleoli to the chromosome surface where it forms extended brush structures that cover a substantial fraction of the chromosome surface. The MKI67 brush structure prevents chromosomes from collapsing into a single chromatin mass by forming a steric and electrostatic charge barrier: the protein has a high net electrical charge and acts as a surfactant, dispersing chromosomes and enabling independent chromosome motility. During mitotic anaphase, the MKI67 brush structure collapses and MKI67 switches from a chromosome repellent to a chromosome attractant to promote chromosome clustering and facilitate the exclusion of large cytoplasmic particles from the future nuclear space. Mechanistically, dephosphorylation during mitotic exit and simultaneous exposure of a conserved basic patch induce the RNA-dependent formation of a liquid-like condensed phase on the chromosome surface, promoting coalescence of neighboring chromosome surfaces and clustering of chromosomes. Binds premature ribosomal RNAs during anaphase; promoting liquid-liquid phase separation. Binds DNA, with a preference for supercoiled DNA and AT-rich DNA. Does not contribute to the internal structure of mitotic chromosomes. May play a role in chromatin organization; it is however unclear whether it plays a direct role in chromatin organization or whether it is an indirect consequence of its function in mitotic chromosome. The sequence is that of Proliferation marker protein Ki-67 from Homo sapiens (Human).